The sequence spans 238 residues: Ciliary microtubule associated protein 1B (238 aa).

An STPGR repeat occupies P182–R207. Positions G206–G238 are disordered.

It belongs to the CIMAP family.

The protein resides in the cell projection. The protein localises to the cilium. It is found in the flagellum. The chain is Ciliary microtubule associated protein 1B (Cimap1b) from Mus musculus (Mouse).